The chain runs to 480 residues: ATP-grasp enzyme ankG (480 aa).

Residues methionine 1–arginine 30 form a disordered region. A compositionally biased stretch (basic and acidic residues) spans alanine 21 to arginine 30.

It catalyses the reaction NK13650 D + L-aspartate + ATP = NK13650 C + AMP + diphosphate + H(+). It carries out the reaction NK13650 B + L-aspartate + ATP = NK13650 A + AMP + diphosphate + H(+). Its pathway is secondary metabolite biosynthesis. ATP-grasp enzyme; part of the ank cluster that mediates the biosynthesis of NK13650 C, a highly modified cyclo-arginine-tyrosine dipeptide. AnkG catalyzes the last step of the pathway via amidation NK13650 D with L-Asp to produce NK13650 C. AnkG also amidates NK13650 B into NK13650 A. Within the pathway, the cyclodipeptide synthase ankA acts as the scaffold-generating enzyme and is responsible for formation of the cyclo-Arg-Tyr diketopiperazine (cRY) from L-Arg and L-Tyr. The ankA product cRY is desaturated by the cytochrome P450 monooxygenase ankB to yield a dehydro-cyclodipeptide intermediate. The FAD-dependent monooxygenase ankC then installs the m-OH, ankD catalyzes the attachment of L-homoserine, and ankE ligates citrate to the ankD product to yield NK13650 B. The O-methyltransferase ankF is responsible for methylation of the C-17 phenol group of NK13650 B to produce NK13650 D. Amidation of NK13650 D with L-Asp by ankG then leads to the production of NK13650 C, whereas amidation of NK13650 B produces NK13650 A. The chain is ATP-grasp enzyme ankG from Aspergillus thermomutatus (Neosartorya pseudofischeri).